The chain runs to 698 residues: Elongation factor G (698 aa).

A tr-type G domain is found at 8–290 (ERYRNIGISA…AVIELLPSPV (283 aa)). Residues 17–24 (AHIDAGKT), 88–92 (DTPGH), and 142–145 (NKMD) each bind GTP.

This sequence belongs to the TRAFAC class translation factor GTPase superfamily. Classic translation factor GTPase family. EF-G/EF-2 subfamily.

It localises to the cytoplasm. Catalyzes the GTP-dependent ribosomal translocation step during translation elongation. During this step, the ribosome changes from the pre-translocational (PRE) to the post-translocational (POST) state as the newly formed A-site-bound peptidyl-tRNA and P-site-bound deacylated tRNA move to the P and E sites, respectively. Catalyzes the coordinated movement of the two tRNA molecules, the mRNA and conformational changes in the ribosome. This is Elongation factor G from Aromatoleum aromaticum (strain DSM 19018 / LMG 30748 / EbN1) (Azoarcus sp. (strain EbN1)).